A 552-amino-acid polypeptide reads, in one-letter code: uncharacterized protein (552 aa).

Residues 8–200 (KLFADMIIQG…LLCVYEGFLK (193 aa)) enclose the DhaL domain.

This is an uncharacterized protein from Staphylococcus haemolyticus (strain JCSC1435).